The chain runs to 392 residues: Formate-dependent phosphoribosylglycinamide formyltransferase (392 aa).

Residues 22 to 23 (EL) and Glu82 contribute to the N(1)-(5-phospho-beta-D-ribosyl)glycinamide site. Residues Arg114, Lys155, 160–165 (SSGKGQ), 195–198 (EGVV), and Glu203 contribute to the ATP site. The 190-residue stretch at 119–308 (RLAAEELGLP…EFALHVRAFL (190 aa)) folds into the ATP-grasp domain. The Mg(2+) site is built by Glu267 and Glu279. Residues Asp286, Lys355, and 362-363 (RR) contribute to the N(1)-(5-phospho-beta-D-ribosyl)glycinamide site.

This sequence belongs to the PurK/PurT family. Homodimer.

The catalysed reaction is N(1)-(5-phospho-beta-D-ribosyl)glycinamide + formate + ATP = N(2)-formyl-N(1)-(5-phospho-beta-D-ribosyl)glycinamide + ADP + phosphate + H(+). Its pathway is purine metabolism; IMP biosynthesis via de novo pathway; N(2)-formyl-N(1)-(5-phospho-D-ribosyl)glycinamide from N(1)-(5-phospho-D-ribosyl)glycinamide (formate route): step 1/1. In terms of biological role, involved in the de novo purine biosynthesis. Catalyzes the transfer of formate to 5-phospho-ribosyl-glycinamide (GAR), producing 5-phospho-ribosyl-N-formylglycinamide (FGAR). Formate is provided by PurU via hydrolysis of 10-formyl-tetrahydrofolate. The polypeptide is Formate-dependent phosphoribosylglycinamide formyltransferase (Salmonella dublin (strain CT_02021853)).